The following is a 254-amino-acid chain: Probable pectate lyase E (254 aa).

Residues 1 to 17 (MYQPLLLLPLLLTSAFA) form the signal peptide. The N-linked (GlcNAc...) asparagine glycan is linked to asparagine 175. The tract at residues 227 to 254 (TDNNDKEPKKKGSGPSNACKYKEPLSKC) is disordered.

It belongs to the polysaccharide lyase 3 family. Requires Ca(2+) as cofactor.

The protein localises to the secreted. The enzyme catalyses Eliminative cleavage of (1-&gt;4)-alpha-D-galacturonan to give oligosaccharides with 4-deoxy-alpha-D-galact-4-enuronosyl groups at their non-reducing ends.. Its function is as follows. Pectinolytic enzyme consist of four classes of enzymes: pectin lyase, polygalacturonase, pectin methylesterase and rhamnogalacturonase. Among pectinolytic enzymes, pectin lyase is the most important in depolymerization of pectin, since it cleaves internal glycosidic bonds of highly methylated pectins. Favors pectate, the anion, over pectin, the methyl ester. The chain is Probable pectate lyase E (plyE) from Neosartorya fischeri (strain ATCC 1020 / DSM 3700 / CBS 544.65 / FGSC A1164 / JCM 1740 / NRRL 181 / WB 181) (Aspergillus fischerianus).